A 633-amino-acid polypeptide reads, in one-letter code: Extracellular metalloproteinase 5 (633 aa).

The signal sequence occupies residues 1–21 (MHGLLLAAAGLLSLPLHVVAH). A propeptide spanning residues 22–245 (PQPSTSLAGR…HNVVDYVSHA (224 aa)) is cleaved from the precursor. Residue Asn285 is glycosylated (N-linked (GlcNAc...) asparagine). His428 is a binding site for Zn(2+). Glu429 is an active-site residue. His432 lines the Zn(2+) pocket. Asn592 and Asn621 each carry an N-linked (GlcNAc...) asparagine glycan.

This sequence belongs to the peptidase M36 family. Zn(2+) is required as a cofactor.

Its subcellular location is the secreted. In terms of biological role, secreted metalloproteinase probably acting as a virulence factor. In Trichophyton rubrum (Athlete's foot fungus), this protein is Extracellular metalloproteinase 5 (MEP5).